The following is a 1279-amino-acid chain: ATP-dependent helicase/nuclease subunit A (1279 aa).

In terms of domain architecture, UvrD-like helicase ATP-binding spans 4–499 (TKWTDEQRQA…VKLFKNFRSR (496 aa)). 25–32 (AGAGAGKT) contacts ATP. Positions 526–853 (EEALKVGASY…RIMSIHKSKG (328 aa)) constitute a UvrD-like helicase C-terminal domain.

Belongs to the helicase family. AddA subfamily. Heterodimer of AddA and AddB/RexB. Requires Mg(2+) as cofactor.

The catalysed reaction is Couples ATP hydrolysis with the unwinding of duplex DNA by translocating in the 3'-5' direction.. The enzyme catalyses ATP + H2O = ADP + phosphate + H(+). In terms of biological role, the heterodimer acts as both an ATP-dependent DNA helicase and an ATP-dependent, dual-direction single-stranded exonuclease. Recognizes the chi site generating a DNA molecule suitable for the initiation of homologous recombination. The AddA nuclease domain is required for chi fragment generation; this subunit has the helicase and 3' -&gt; 5' nuclease activities. The sequence is that of ATP-dependent helicase/nuclease subunit A from Clostridium botulinum (strain Kyoto / Type A2).